A 269-amino-acid polypeptide reads, in one-letter code: NAD kinase (269 aa).

The Proton acceptor role is filled by Asp45. Residues 45–46 (DG), 122–123 (NE), Arg149, Asp151, and Ala186 contribute to the NAD(+) site.

The protein belongs to the NAD kinase family. A divalent metal cation serves as cofactor.

Its subcellular location is the cytoplasm. The enzyme catalyses NAD(+) + ATP = ADP + NADP(+) + H(+). In terms of biological role, involved in the regulation of the intracellular balance of NAD and NADP, and is a key enzyme in the biosynthesis of NADP. Catalyzes specifically the phosphorylation on 2'-hydroxyl of the adenosine moiety of NAD to yield NADP. The chain is NAD kinase from Staphylococcus haemolyticus (strain JCSC1435).